The sequence spans 222 residues: Peptide methionine sulfoxide reductase MsrA (222 aa).

Cys60 is a catalytic residue.

It belongs to the MsrA Met sulfoxide reductase family.

The catalysed reaction is L-methionyl-[protein] + [thioredoxin]-disulfide + H2O = L-methionyl-(S)-S-oxide-[protein] + [thioredoxin]-dithiol. The enzyme catalyses [thioredoxin]-disulfide + L-methionine + H2O = L-methionine (S)-S-oxide + [thioredoxin]-dithiol. Functionally, has an important function as a repair enzyme for proteins that have been inactivated by oxidation. Catalyzes the reversible oxidation-reduction of methionine sulfoxide in proteins to methionine. The sequence is that of Peptide methionine sulfoxide reductase MsrA from Pseudomonas putida (strain GB-1).